The following is a 125-amino-acid chain: Inner membrane protein YbaN (125 aa).

The Cytoplasmic segment spans residues 1–6 (MQRIIL). Residues 7–26 (IIIGWLAVVLGTLGVVLPVL) traverse the membrane as a helical segment. At 27–45 (PTTPFILLAAWCFARSSPR) the chain is on the periplasmic side. Residues 46 to 63 (FHAWLLYRSWFGSYLRFW) traverse the membrane as a helical segment. The Cytoplasmic segment spans residues 64–74 (QKHHAMPRGVK). A helical membrane pass occupies residues 75–92 (PRAILLILLTFAISLWFV). Topologically, residues 93–95 (QMP) are periplasmic. A helical transmembrane segment spans residues 96–118 (WVRIMLLVILACLLFYMWRIPVI). Topologically, residues 119-125 (DEKQEKH) are cytoplasmic.

Its subcellular location is the cell inner membrane. This is Inner membrane protein YbaN (ybaN) from Escherichia coli O157:H7.